Reading from the N-terminus, the 477-residue chain is MSFSQFGYPYNATSQFFVSATPSTTCCDSISRSVTEGSSASQTAASFCCPSYENRLLASTRTELNAALGMYGSPYAAAAAAAGQNYANYFPYSADPSAIYSSLNPQYEIKEGSGSLHSTITQPATYYPYDHSLGQYQYDRYGTVDFNGSTRRKNATRETTSTLKTWLYEHRKNPYPTKGEKIMLAIITKMTLTQVSTWFANARRRLKKENKMTWSPKNKAGDDRKEDLDSKDSKDEQDLQFSDLDDMEDEDCDKLDSDCEKSGQDDLPTSSPPKRDCNPDIPLHSNFPSFPCGLKSLGPLNPDYLDHLGSKPQQQQPSPQSTSINTVALSHFESSEKPRIWSLARTAAAGVVLGTQHVGDVRTGPVDCQMQGVRLPTVGAVQCGELKGLQDPTNLSNTESLFQEGLQGIHKAYSSGSFKTLQLHSSSYPGLTESCQYSSMEGFPSAGKTETESSELSDTCPTIQEAKTTAFRPVMKR.

The segment at residues 148–210 (GSTRRKNATR…NARRRLKKEN (63 aa)) is a DNA-binding region (homeobox). Disordered stretches follow at residues 209–282 (ENKM…PDIP) and 303–323 (DYLD…QSTS). Positions 219–237 (KAGDDRKEDLDSKDSKDEQ) are enriched in basic and acidic residues. Positions 243 to 253 (DLDDMEDEDCD) are enriched in acidic residues. Basic and acidic residues predominate over residues 254 to 264 (KLDSDCEKSGQ). Positions 310–321 (SKPQQQQPSPQS) are enriched in low complexity.

The protein belongs to the TALE/IRO homeobox family.

The protein resides in the nucleus. Its function is as follows. Transcription factor. Binds to the iroquois binding site (IBS) motif of target genes to regulate gene expression; functions as a transcriptional activator or repressor. In concert with irx5a, plays a role in visual performance. The sequence is that of Iroquois homeobox protein 6a from Danio rerio (Zebrafish).